A 431-amino-acid polypeptide reads, in one-letter code: MLKQIDYQGKLEEIAEKFQGRKTEVSKEVNKTVQQIVADIQKNGDTALFNYAKKFDGYDVNTSNLLVTRMEREAGLEQIDEDYFRILRRTKSQIEEFHKHQLGNSWNIFKENGVIMGQIARPLERVALYVPGGTAAYPSTVIMNAVPALLAGVKEIIMITPVKADGKVNPNILAAAEVCGIETIYKVGGAQGVAAVAYGTESIPKVDKIVGPGNIFVATAKKICYGVVDIDMIAGPSEVLVIADKTAKPKYIAADLMAQAEHDKLASAILVTTSEKLVQQVDEELNRQVQNLERREIIESSIRNYGGAIVVKNIDDAFDVSNQLAPEHLEVLTSEPLTQLPKIKNAGSIFIGEYTPEPLGDYMSGSNHVLPTGGTAKFYSGLGVYNFIKYLTYSYYPKEVLADFKEDVETFAKSEGLTAHANSISVRFDEM.

Positions 129, 191, and 214 each coordinate NAD(+). Residues serine 237, glutamine 259, and histidine 262 each contribute to the substrate site. Glutamine 259 and histidine 262 together coordinate Zn(2+). Residues glutamate 327 and histidine 328 each act as proton acceptor in the active site. Substrate is bound by residues histidine 328, aspartate 361, glutamate 415, and histidine 420. Residue aspartate 361 participates in Zn(2+) binding. Histidine 420 contributes to the Zn(2+) binding site.

It belongs to the histidinol dehydrogenase family. The cofactor is Zn(2+).

The catalysed reaction is L-histidinol + 2 NAD(+) + H2O = L-histidine + 2 NADH + 3 H(+). It functions in the pathway amino-acid biosynthesis; L-histidine biosynthesis; L-histidine from 5-phospho-alpha-D-ribose 1-diphosphate: step 9/9. Catalyzes the sequential NAD-dependent oxidations of L-histidinol to L-histidinaldehyde and then to L-histidine. The protein is Histidinol dehydrogenase (hisD) of Lactococcus lactis subsp. lactis (strain IL1403) (Streptococcus lactis).